Here is a 289-residue protein sequence, read N- to C-terminus: MSNAKEIRSQIKSVKSTQKITKAMEMVAASKVRRVQNYMRGGRPYAEHIQRVIAHLVRASSSTLHPFLVKPEKVETVGYIVISTDRGLCGGLNINLFKTLWQHICGEQKKGHKIVATVFGRKGVAFLNRAQVPLLSTIENYPEEPQTHELIGAIYPMIEGFNRGEIQKIYIVGNVFENAMTQKPTITQLLPASVQFADGMTAKHAWDYIYEPNAESILDTLLKRYLEFTVKQAVAENIACEMSARMLAMKSASDNAGALIKELQLKYNKARQTAITQELTEIVAGADAV.

This sequence belongs to the ATPase gamma chain family. As to quaternary structure, F-type ATPases have 2 components, CF(1) - the catalytic core - and CF(0) - the membrane proton channel. CF(1) has five subunits: alpha(3), beta(3), gamma(1), delta(1), epsilon(1). CF(0) has three main subunits: a, b and c.

The protein localises to the cell inner membrane. Its function is as follows. Produces ATP from ADP in the presence of a proton gradient across the membrane. The gamma chain is believed to be important in regulating ATPase activity and the flow of protons through the CF(0) complex. This chain is ATP synthase gamma chain, found in Dichelobacter nodosus (strain VCS1703A).